The chain runs to 190 residues: Segregation and condensation protein B (190 aa).

Belongs to the ScpB family. Homodimer. Homodimerization may be required to stabilize the binding of ScpA to the Smc head domains. Component of a cohesin-like complex composed of ScpA, ScpB and the Smc homodimer, in which ScpA and ScpB bind to the head domain of Smc. The presence of the three proteins is required for the association of the complex with DNA.

The protein localises to the cytoplasm. Functionally, participates in chromosomal partition during cell division. May act via the formation of a condensin-like complex containing Smc and ScpA that pull DNA away from mid-cell into both cell halves. In Alkaliphilus metalliredigens (strain QYMF), this protein is Segregation and condensation protein B.